The primary structure comprises 232 residues: 7-cyano-7-deazaguanine synthase (232 aa).

Residue 11 to 21 (ASGGMDSATAA) participates in ATP binding. C192, C200, C203, and C206 together coordinate Zn(2+).

It belongs to the QueC family. The cofactor is Zn(2+).

The catalysed reaction is 7-carboxy-7-deazaguanine + NH4(+) + ATP = 7-cyano-7-deazaguanine + ADP + phosphate + H2O + H(+). It functions in the pathway purine metabolism; 7-cyano-7-deazaguanine biosynthesis. Its function is as follows. Catalyzes the ATP-dependent conversion of 7-carboxy-7-deazaguanine (CDG) to 7-cyano-7-deazaguanine (preQ(0)). The sequence is that of 7-cyano-7-deazaguanine synthase from Haloarcula marismortui (strain ATCC 43049 / DSM 3752 / JCM 8966 / VKM B-1809) (Halobacterium marismortui).